The chain runs to 173 residues: Cytidylate kinase (173 aa).

An ATP-binding site is contributed by 7–15 (GLAGTGTST).

The protein belongs to the cytidylate kinase family. Type 2 subfamily.

Its subcellular location is the cytoplasm. It catalyses the reaction CMP + ATP = CDP + ADP. It carries out the reaction dCMP + ATP = dCDP + ADP. This Methanosphaera stadtmanae (strain ATCC 43021 / DSM 3091 / JCM 11832 / MCB-3) protein is Cytidylate kinase.